Consider the following 96-residue polypeptide: MAEARSKISFEDALVELEQIAEKLERQDFSLEESLKAYERGMELKKICRGILDSAEGKIEALTKDESQKTNKTGFRTESKSTSQTSSDSVLEEDLF.

Positions alanine 61–serine 79 are enriched in basic and acidic residues. Positions alanine 61 to phenylalanine 96 are disordered. Over residues lysine 80 to serine 89 the composition is skewed to low complexity.

Belongs to the XseB family. In terms of assembly, heterooligomer composed of large and small subunits.

It is found in the cytoplasm. It carries out the reaction Exonucleolytic cleavage in either 5'- to 3'- or 3'- to 5'-direction to yield nucleoside 5'-phosphates.. Bidirectionally degrades single-stranded DNA into large acid-insoluble oligonucleotides, which are then degraded further into small acid-soluble oligonucleotides. The polypeptide is Exodeoxyribonuclease 7 small subunit (Leptospira borgpetersenii serovar Hardjo-bovis (strain JB197)).